A 1097-amino-acid polypeptide reads, in one-letter code: DNA-directed RNA polymerase subunit beta (1097 aa).

Positions Gln-1072–Asp-1097 are disordered. Residues Arg-1077 to Thr-1091 are compositionally biased toward polar residues.

Belongs to the RNA polymerase beta chain family. As to quaternary structure, in cyanobacteria the RNAP catalytic core is composed of 2 alpha, 1 beta, 1 beta', 1 gamma and 1 omega subunit. When a sigma factor is associated with the core the holoenzyme is formed, which can initiate transcription.

It carries out the reaction RNA(n) + a ribonucleoside 5'-triphosphate = RNA(n+1) + diphosphate. Its function is as follows. DNA-dependent RNA polymerase catalyzes the transcription of DNA into RNA using the four ribonucleoside triphosphates as substrates. This is DNA-directed RNA polymerase subunit beta from Prochlorococcus marinus (strain AS9601).